The chain runs to 224 residues: Phosphoribosylformylglycinamidine synthase subunit PurQ (224 aa).

The 221-residue stretch at 4–224 (RIGVVTFPGT…YSALDAVLTG (221 aa)) folds into the Glutamine amidotransferase type-1 domain. Residue Cys-87 is the Nucleophile of the active site. Residues His-195 and Glu-197 contribute to the active site.

In terms of assembly, part of the FGAM synthase complex composed of 1 PurL, 1 PurQ and 2 PurS subunits.

The protein resides in the cytoplasm. The catalysed reaction is N(2)-formyl-N(1)-(5-phospho-beta-D-ribosyl)glycinamide + L-glutamine + ATP + H2O = 2-formamido-N(1)-(5-O-phospho-beta-D-ribosyl)acetamidine + L-glutamate + ADP + phosphate + H(+). It catalyses the reaction L-glutamine + H2O = L-glutamate + NH4(+). It participates in purine metabolism; IMP biosynthesis via de novo pathway; 5-amino-1-(5-phospho-D-ribosyl)imidazole from N(2)-formyl-N(1)-(5-phospho-D-ribosyl)glycinamide: step 1/2. In terms of biological role, part of the phosphoribosylformylglycinamidine synthase complex involved in the purines biosynthetic pathway. Catalyzes the ATP-dependent conversion of formylglycinamide ribonucleotide (FGAR) and glutamine to yield formylglycinamidine ribonucleotide (FGAM) and glutamate. The FGAM synthase complex is composed of three subunits. PurQ produces an ammonia molecule by converting glutamine to glutamate. PurL transfers the ammonia molecule to FGAR to form FGAM in an ATP-dependent manner. PurS interacts with PurQ and PurL and is thought to assist in the transfer of the ammonia molecule from PurQ to PurL. The sequence is that of Phosphoribosylformylglycinamidine synthase subunit PurQ from Mycobacterium bovis (strain ATCC BAA-935 / AF2122/97).